A 459-amino-acid chain; its full sequence is Vanillin aminotransferase (459 aa).

Residues 115–116 (GS) and Asp255 each bind pyridoxal 5'-phosphate. Lys284 is subject to N6-(pyridoxal phosphate)lysine. Residue 320-321 (FT) participates in pyridoxal 5'-phosphate binding. The stretch at 428 to 459 (LSLEELDELIRIYGKALKDTEKRVEELKSQKK) forms a coiled coil.

This sequence belongs to the class-III pyridoxal-phosphate-dependent aminotransferase family. As to expression, expressed in placental tissue of immature fruit.

The catalysed reaction is vanillin + L-alanine = vanillylamine + pyruvate. Its function is as follows. Involved in the biosynthesis of capsaicinoids natural products, pungent alkaloids synthesized from phenylpropanoid intermediates in the placental tissue of chili pepper fruit acting as repellant on herbivorous mammals and conferring spiciness to hot peppers. Can transfer an amine from alanine to vanillin, forming vanillylamine and pyruvate. The chain is Vanillin aminotransferase from Capsicum frutescens (Cayenne pepper).